Reading from the N-terminus, the 289-residue chain is 3-methyl-2-oxobutanoate hydroxymethyltransferase (289 aa).

Residues aspartate 50 and aspartate 89 each coordinate Mg(2+). 3-methyl-2-oxobutanoate contacts are provided by residues 50-51, aspartate 89, and lysine 119; that span reads DS. A Mg(2+)-binding site is contributed by glutamate 121. The active-site Proton acceptor is glutamate 188. The segment at 266-289 is disordered; that stretch reads AQHSFGMPEDEQRRWEENVSGADD.

It belongs to the PanB family. In terms of assembly, homodecamer; pentamer of dimers. Mg(2+) is required as a cofactor.

It localises to the cytoplasm. It carries out the reaction 3-methyl-2-oxobutanoate + (6R)-5,10-methylene-5,6,7,8-tetrahydrofolate + H2O = 2-dehydropantoate + (6S)-5,6,7,8-tetrahydrofolate. It participates in cofactor biosynthesis; (R)-pantothenate biosynthesis; (R)-pantoate from 3-methyl-2-oxobutanoate: step 1/2. Its function is as follows. Catalyzes the reversible reaction in which hydroxymethyl group from 5,10-methylenetetrahydrofolate is transferred onto alpha-ketoisovalerate to form ketopantoate. This is 3-methyl-2-oxobutanoate hydroxymethyltransferase from Oleidesulfovibrio alaskensis (strain ATCC BAA-1058 / DSM 17464 / G20) (Desulfovibrio alaskensis).